The primary structure comprises 239 residues: MAYQSLRLEYLQIPPVSRAYTTACVLTTAAVQLELITPFQLYFNPELIFKHFQIWRLITNFLFFGPVGFNFLFNMIFLYRYCRMLEEGSFRGRTADFVFMFLFGGFLMTLFGLFVSLVFLGQAFTIMLVYVWSRRNPYVRMNFFGLLNFQAPFLPWVLMGFSLLLGNSIIVDLLGIAVGHIYFFLEDVFPNQPGGIRILKTPSILKAIFDTPDEDPNYNPLPEERPGGFAWGEGQRLGG.

At 1–56 (MAYQSLRLEYLQIPPVSRAYTTACVLTTAAVQLELITPFQLYFNPELIFKHFQIWR) the chain is on the cytoplasmic side. Residues 57-77 (LITNFLFFGPVGFNFLFNMIF) traverse the membrane as a helical segment. Over 78 to 98 (LYRYCRMLEEGSFRGRTADFV) the chain is Lumenal. Residues 99–119 (FMFLFGGFLMTLFGLFVSLVF) traverse the membrane as a helical segment. At 120–150 (LGQAFTIMLVYVWSRRNPYVRMNFFGLLNFQ) the chain is on the cytoplasmic side. Residues 151-171 (APFLPWVLMGFSLLLGNSIIV) traverse the membrane as a helical segment. Residue Asp172 is a topological domain, lumenal. A helical membrane pass occupies residues 173 to 193 (LLGIAVGHIYFFLEDVFPNQP). At 194 to 239 (GGIRILKTPSILKAIFDTPDEDPNYNPLPEERPGGFAWGEGQRLGG) the chain is on the cytoplasmic side. Residues 215–239 (DPNYNPLPEERPGGFAWGEGQRLGG) are disordered. The segment covering 229–239 (FAWGEGQRLGG) has biased composition (gly residues).

This sequence belongs to the derlin family. As to quaternary structure, forms homo- and heterooligomers with DERL3 and, to a lesser extent, with DERL1. Interacts with the SEL1L/SYVN1 and VCP/SELENOS protein complexes. Mediates association between VCP and EDEM1, as well as that between VCP and the misfolded glycoproteins. Interacts with OS9. Interacts with SELENOK and SELENOS. Interacts with the signal recognition particle/SRP and the SRP receptor; in the process of endoplasmic reticulum stress-induced pre-emptive quality control. Interacts with CCDC47.

The protein resides in the endoplasmic reticulum membrane. In terms of biological role, functional component of endoplasmic reticulum-associated degradation (ERAD) for misfolded lumenal glycoproteins, but not that of misfolded nonglycoproteins. May act by forming a channel that allows the retrotranslocation of misfolded glycoproteins into the cytosol where they are ubiquitinated and degraded by the proteasome. May mediate the interaction between VCP and misfolded glycoproteins. May also be involved in endoplasmic reticulum stress-induced pre-emptive quality control, a mechanism that selectively attenuates the translocation of newly synthesized proteins into the endoplasmic reticulum and reroutes them to the cytosol for proteasomal degradation. In Pongo abelii (Sumatran orangutan), this protein is Derlin-2.